The chain runs to 944 residues: Neutral alpha-glucosidase AB (944 aa).

A signal peptide spans 1-28; sequence MAAVAAVAARRRRSWASLVLAFLGVCLG. Residues Cys41 and Cys47 are joined by a disulfide bond. The residue at position 52 (Ser52) is a Phosphoserine. A glycan (N-linked (GlcNAc...) asparagine) is linked at Asn97. The segment at 181 to 238 is disordered; it reads QRAPRVSQGSKDPAEGDGAQPEETPRDGDKPEETQGKAEKDEPGAWEETFKTHSDSKP. Over residues 203 to 236 the composition is skewed to basic and acidic residues; it reads ETPRDGDKPEETQGKAEKDEPGAWEETFKTHSDS. Substrate-binding residues include Asp283 and Asp429. Asp542 (nucleophile) is an active-site residue. A substrate-binding site is contributed by Arg602. Asp618 functions as the Proton donor in the catalytic mechanism. Cys633 and Cys644 are oxidised to a cystine. His676 is a binding site for substrate.

Belongs to the glycosyl hydrolase 31 family. As to quaternary structure, heterodimer of a catalytic alpha subunit (GANAB) and a beta subunit (PRKCSH). Binds glycosylated PTPRC. Detected in placenta. Isoform 1 and isoform 2 are expressed in the kidney and liver.

It localises to the endoplasmic reticulum. The protein localises to the golgi apparatus. The protein resides in the melanosome. The enzyme catalyses N(4)-(alpha-D-Glc-(1-&gt;3)-alpha-D-Man-(1-&gt;2)-alpha-D-Man-(1-&gt;2)-alpha-D-Man-(1-&gt;3)-[alpha-D-Man-(1-&gt;2)-alpha-D-Man-(1-&gt;3)-[alpha-D-Man-(1-&gt;2)-alpha-D-Man-(1-&gt;6)]-alpha-D-Man-(1-&gt;6)]-beta-D-Man-(1-&gt;4)-beta-D-GlcNAc-(1-&gt;4)-beta-D-GlcNAc)-L-asparaginyl-[protein] + H2O = N(4)-(alpha-D-Man-(1-&gt;2)-alpha-D-Man-(1-&gt;2)-alpha-D-Man-(1-&gt;3)-[alpha-D-Man-(1-&gt;2)-alpha-D-Man-(1-&gt;3)-[alpha-D-Man-(1-&gt;2)-alpha-D-Man-(1-&gt;6)]-alpha-D-Man-(1-&gt;6)]-beta-D-Man-(1-&gt;4)-beta-D-GlcNAc-(1-&gt;4)-beta-D-GlcNAc)-L-asparaginyl-[protein] (N-glucan mannose isomer 9A1,2,3B1,2,3) + beta-D-glucose. The catalysed reaction is N(4)-(alpha-D-Glc-(1-&gt;3)-alpha-D-Glc-(1-&gt;3)-alpha-D-Man-(1-&gt;2)-alpha-D-Man-(1-&gt;2)-alpha-D-Man-(1-&gt;3)-[alpha-D-Man-(1-&gt;2)-alpha-D-Man-(1-&gt;3)-[alpha-D-Man-(1-&gt;2)-alpha-D-Man-(1-&gt;6)]-alpha-D-Man-(1-&gt;6)]-beta-D-Man-(1-&gt;4)-beta-D-GlcNAc-(1-&gt;4)-beta-D-GlcNAc)-L-asparaginyl-[protein] + H2O = N(4)-(alpha-D-Glc-(1-&gt;3)-alpha-D-Man-(1-&gt;2)-alpha-D-Man-(1-&gt;2)-alpha-D-Man-(1-&gt;3)-[alpha-D-Man-(1-&gt;2)-alpha-D-Man-(1-&gt;3)-[alpha-D-Man-(1-&gt;2)-alpha-D-Man-(1-&gt;6)]-alpha-D-Man-(1-&gt;6)]-beta-D-Man-(1-&gt;4)-beta-D-GlcNAc-(1-&gt;4)-beta-D-GlcNAc)-L-asparaginyl-[protein] + beta-D-glucose. It functions in the pathway glycan metabolism; N-glycan metabolism. Its activity is regulated as follows. Inhibited by deoxynojirimycin. In terms of biological role, catalytic subunit of glucosidase II that cleaves sequentially the 2 innermost alpha-1,3-linked glucose residues from the Glc(2)Man(9)GlcNAc(2) oligosaccharide precursor of immature glycoproteins. Required for PKD1/Polycystin-1 and PKD2/Polycystin-2 maturation and localization to the cell surface and cilia. The chain is Neutral alpha-glucosidase AB from Homo sapiens (Human).